The primary structure comprises 485 residues: Cysteine--tRNA ligase (485 aa).

A Zn(2+)-binding site is contributed by Cys27. Positions 29–39 match the 'HIGH' region motif; it reads ITAYDLCHLGH. Zn(2+) contacts are provided by Cys208, His233, and Glu237. The 'KMSKS' region signature appears at 265-269; that stretch reads KMSKS. ATP is bound at residue Lys268.

The protein belongs to the class-I aminoacyl-tRNA synthetase family. As to quaternary structure, monomer. Zn(2+) is required as a cofactor.

Its subcellular location is the cytoplasm. It catalyses the reaction tRNA(Cys) + L-cysteine + ATP = L-cysteinyl-tRNA(Cys) + AMP + diphosphate. The chain is Cysteine--tRNA ligase from Oleidesulfovibrio alaskensis (strain ATCC BAA-1058 / DSM 17464 / G20) (Desulfovibrio alaskensis).